We begin with the raw amino-acid sequence, 438 residues long: Ubiquitin carboxyl-terminal hydrolase 27 (438 aa).

The region spanning 78–421 is the USP domain; sequence RGLINLGNTC…EGYLLFYHKQ (344 aa). Cysteine 87 acts as the Nucleophile in catalysis. The active-site Proton acceptor is the histidine 380.

Belongs to the peptidase C19 family. In terms of assembly, interacts with phosphorylated BCL2L11 isoform BIMEL; this interaction leads to BCL2L11 deubiquitination and stabilization.

It is found in the cytoplasm. Its subcellular location is the cytosol. It localises to the nucleus. The enzyme catalyses Thiol-dependent hydrolysis of ester, thioester, amide, peptide and isopeptide bonds formed by the C-terminal Gly of ubiquitin (a 76-residue protein attached to proteins as an intracellular targeting signal).. Deubiquitinase involved in innate antiviral immunity by mediating deubiquitination of CGAS and RIGI. Negatively regulates RIGI by mediating 'Lys-63'-linked deubiquitination of RIGI, inhibiting type I interferon signaling. Also regulates 'Lys-63'-linked ubiquitination level of MDA5/IFIH1. Acts as a positive regulator of the cGAS-STING pathway by catalyzing 'Lys-48'-linked deubiquitination of CGAS, thereby promoting its stabilization. Can reduce the levels of BCL2L11/BIM ubiquitination and stabilize BCL2L11 in response to the RAF-MAPK-degradation signal. By acting on BCL2L11 levels, may counteract the anti-apoptotic effects of MAPK activity. This is Ubiquitin carboxyl-terminal hydrolase 27 from Homo sapiens (Human).